The following is a 25-amino-acid chain: Large ribosomal subunit protein uL30 (25 aa).

It belongs to the universal ribosomal protein uL30 family. In terms of assembly, part of the 50S ribosomal subunit.

In Pseudomonas fluorescens biotype A, this protein is Large ribosomal subunit protein uL30 (rpmD).